The sequence spans 340 residues: Glutamine synthetase (340 aa).

The 80-residue stretch at 3–82 (IKAEYIWIDG…LCEVLHTDLT (80 aa)) folds into the GS beta-grasp domain. Residues 88 to 340 (TRALLRPVAE…CTELARREQI (253 aa)) form the GS catalytic domain. The Mg(2+) site is built by E109, E111, E171, and E178. E276 serves as a coordination point for L-glutamate.

Belongs to the glutamine synthetase family. Homooctamer and homotetramer. Mg(2+) is required as a cofactor.

Its subcellular location is the cytoplasm. The enzyme catalyses L-glutamate + NH4(+) + ATP = L-glutamine + ADP + phosphate + H(+). Functionally, catalyzes the ATP-dependent biosynthesis of glutamine from glutamate and ammonia. The chain is Glutamine synthetase from Streptomyces hygroscopicus.